The sequence spans 391 residues: Probable sugar efflux transporter (391 aa).

12 helical membrane passes run 16–36, 51–71, 82–102, 110–130, 138–158, 170–190, 210–230, 247–267, 277–297, 300–320, 338–358, and 361–381; these read VFVFSLSAFIFNTTEFVPVAL, VGLMITAYAWVVSLGSLPLML, LLFLFALFILSHILSALAWNF, MGIAFTHSIFWSITASLVIRV, QALGLLALGSSLAMILGLPLG, TFGVIGGVATLIALLMWKLLP, PLLMGIYLLVIMVISGHFTTY, ITTLMLFVFGLAGVAGSFLFS, FIAFAMVLVICPQLLLFVFKN, WVIFLQIFLWGIGITSLTIAL, IFSGSYNVGIGSGALFGSIVI, and LGLEYIGFVGGALGLLALFWL.

Belongs to the major facilitator superfamily. SotB (TC 2.A.1.2) family.

The protein localises to the cell inner membrane. In terms of biological role, involved in the efflux of sugars. The physiological role may be the reduction of the intracellular concentration of toxic sugars or sugar metabolites. The protein is Probable sugar efflux transporter of Helicobacter pylori (strain HPAG1).